Here is a 327-residue protein sequence, read N- to C-terminus: Protoheme IX farnesyltransferase (327 aa).

Helical transmembrane passes span 55–75, 101–121, 124–144, 152–172, 180–200, 237–257, and 278–298; these read LVCTLGGGALAAAAAGVLNCL, AAFVGAVSCTLAAAALLVSGV, LAAGLSLLGLCSYVLLYTALL, IVVGGVAGAIPPLVGAAAATG, WLFALVMVWTPAHFWALALLL, FLGIWALPEGGALYGLLILPF, and AKGLFRWSILYLFGVCLLLVM.

This sequence belongs to the UbiA prenyltransferase family. Protoheme IX farnesyltransferase subfamily.

It localises to the cell inner membrane. It carries out the reaction heme b + (2E,6E)-farnesyl diphosphate + H2O = Fe(II)-heme o + diphosphate. Its pathway is porphyrin-containing compound metabolism; heme O biosynthesis; heme O from protoheme: step 1/1. Functionally, converts heme B (protoheme IX) to heme O by substitution of the vinyl group on carbon 2 of heme B porphyrin ring with a hydroxyethyl farnesyl side group. The protein is Protoheme IX farnesyltransferase of Synechococcus sp. (strain CC9311).